The following is a 106-amino-acid chain: Protein Rev (106 aa).

The segment at Leu8–Asn16 is homomultimerization. The tract at residues Gln14–Gln39 is disordered. Residues Thr24–Arg40 carry the Nuclear localization signal and RNA-binding (RRE) motif. A compositionally biased stretch (basic residues) spans Gln26 to Glu37. Residues Leu63–Asp74 carry the Nuclear export signal and binding to XPO1 motif. Phosphoserine; by host is present on residues Ser82 and Ser89. The interval Ser82–Glu106 is disordered.

It belongs to the HIV-1 REV protein family. In terms of assembly, homomultimer; when bound to the RRE. Multimeric assembly is essential for activity and may involve XPO1. Binds to human KPNB1, XPO1, TNPO1, RANBP5 and IPO7. Interacts with the viral Integrase. Interacts with human KHDRBS1. Interacts with human NAP1; this interaction decreases Rev multimerization and stimulates its activity. Interacts with human DEAD-box helicases DDX3 and DDX24; these interactions may serve for viral RNA export to the cytoplasm and packaging, respectively. Interacts with human PSIP1; this interaction may inhibit HIV-1 DNA integration by promoting dissociation of the Integrase-LEDGF/p75 complex. Asymmetrically arginine dimethylated at one site by host PRMT6. Methylation impairs the RNA-binding activity and export of viral RNA from the nucleus to the cytoplasm. Post-translationally, phosphorylated by protein kinase CK2. Presence of, and maybe binding to the N-terminus of the regulatory beta subunit of CK2 is necessary for CK2-mediated Rev's phosphorylation.

It is found in the host nucleus. The protein resides in the host nucleolus. It localises to the host cytoplasm. Functionally, escorts unspliced or incompletely spliced viral pre-mRNAs (late transcripts) out of the nucleus of infected cells. These pre-mRNAs carry a recognition sequence called Rev responsive element (RRE) located in the env gene, that is not present in fully spliced viral mRNAs (early transcripts). This function is essential since most viral proteins are translated from unspliced or partially spliced pre-mRNAs which cannot exit the nucleus by the pathway used by fully processed cellular mRNAs. Rev itself is translated from a fully spliced mRNA that readily exits the nucleus. Rev's nuclear localization signal (NLS) binds directly to KPNB1/Importin beta-1 without previous binding to KPNA1/Importin alpha-1. KPNB1 binds to the GDP bound form of RAN (Ran-GDP) and targets Rev to the nucleus. In the nucleus, the conversion from Ran-GDP to Ran-GTP dissociates Rev from KPNB1 and allows Rev's binding to the RRE in viral pre-mRNAs. Rev multimerization on the RRE via cooperative assembly exposes its nuclear export signal (NES) to the surface. Rev can then form a complex with XPO1/CRM1 and Ran-GTP, leading to nuclear export of the complex. Conversion from Ran-GTP to Ran-GDP mediates dissociation of the Rev/RRE/XPO1/RAN complex, so that Rev can return to the nucleus for a subsequent round of export. Beside KPNB1, also seems to interact with TNPO1/Transportin-1, RANBP5/IPO5 and IPO7/RANBP7 for nuclear import. The nucleoporin-like HRB/RIP is an essential cofactor that probably indirectly interacts with Rev to release HIV RNAs from the perinuclear region to the cytoplasm. The sequence is that of Protein Rev from Homo sapiens (Human).